A 300-amino-acid chain; its full sequence is Ubiquinone biosynthesis protein COQ4, mitochondrial (300 aa).

Zn(2+) is bound by residues His-173, Asp-174, His-177, and Glu-189.

The protein belongs to the COQ4 family. Component of a multi-subunit COQ enzyme complex, composed of at least COQ3, COQ4, COQ5, COQ6, COQ7 and COQ9. Requires Zn(2+) as cofactor.

The protein resides in the mitochondrion inner membrane. The catalysed reaction is a 4-hydroxy-3-methoxy-5-(all-trans-polyprenyl)benzoate + H(+) = a 2-methoxy-6-(all-trans-polyprenyl)phenol + CO2. It participates in cofactor biosynthesis; ubiquinone biosynthesis. Its function is as follows. Lyase that catalyzes the C1-decarboxylation of 4-hydroxy-3-methoxy-5-(all-trans-polyprenyl)benzoic acid into 2-methoxy-6-(all-trans-polyprenyl)phenol during ubiquinone biosynthesis. This is Ubiquinone biosynthesis protein COQ4, mitochondrial from Cryptococcus neoformans var. neoformans serotype D (strain JEC21 / ATCC MYA-565) (Filobasidiella neoformans).